The chain runs to 437 residues: Oxysterol-binding protein homolog 7 (437 aa).

Positions 23 to 32 are enriched in polar residues; that stretch reads IASNAANSKP. The segment at 23–42 is disordered; it reads IASNAANSKPSGADTDDIDE. The interval 54 to 393 is OSBP-related domain (ORD); it reads IISQLKPGCD…EDLDYYIYKH (340 aa). Residues 64-69, 126-129, and 157-158 each bind a 1,2-diacyl-sn-glycero-3-phospho-(1D-myo-inositol 4-phosphate); these read LSRITL, KPLN, and HH. A 1,2-diacyl-sn-glycero-3-phospho-L-serine contacts are provided by residues 64–69 and Asn129; that span reads LSRITL. An a 1,2-diacyl-sn-glycero-3-phospho-L-serine-binding site is contributed by Ser183. Lys276 participates in a covalent cross-link: Glycyl lysine isopeptide (Lys-Gly) (interchain with G-Cter in ubiquitin). A 1,2-diacyl-sn-glycero-3-phospho-(1D-myo-inositol 4-phosphate)-binding residues include Lys351, Glu355, and Arg359.

This sequence belongs to the OSBP family. In terms of assembly, interacts with the AAA ATPase VPS4; regulates OSH7 membrane association. VPS4 is required for membrane dissociation of OSH7.

The protein localises to the cytoplasm. It is found in the cell membrane. The protein resides in the endoplasmic reticulum membrane. It catalyses the reaction a 1,2-diacyl-sn-glycero-3-phospho-L-serine(in) = a 1,2-diacyl-sn-glycero-3-phospho-L-serine(out). Its function is as follows. ipid transport protein (LTP) involved in non-vesicular transfer of lipids between membranes. Functions in phosphoinositide-coupled directional transport of various lipids by carrying the lipid molecule in a hydrophobic pocket and transferring it between membranes through the cytosol. Involved in maintenance of intracellular sterol distribution and homeostasis. Involved in lipid countertransport between the endoplasmic reticulum and the plasma membrane. Specifically exchanges phosphatidylserine with phosphatidylinositol 4-phosphate (PI4P), delivering phosphatidylserine to the PM in exchange for PI4P, which is delivered to the ER-localized PI4P phosphatase SAC1 for degradation. Thus, by maintaining a PI4P gradient at the ER/PM interface, SAC1 drives PS transport. Binds phosphatidylserine and PI4P in a mutually exclusive manner. In Saccharomyces cerevisiae (strain ATCC 204508 / S288c) (Baker's yeast), this protein is Oxysterol-binding protein homolog 7.